The following is a 417-amino-acid chain: Serine hydroxymethyltransferase (417 aa).

Residues Leu121 and 125 to 127 each bind (6S)-5,6,7,8-tetrahydrofolate; that span reads GHL. Residue Lys229 is modified to N6-(pyridoxal phosphate)lysine. 355–357 contacts (6S)-5,6,7,8-tetrahydrofolate; that stretch reads SPF.

The protein belongs to the SHMT family. Homodimer. The cofactor is pyridoxal 5'-phosphate.

The protein resides in the cytoplasm. It carries out the reaction (6R)-5,10-methylene-5,6,7,8-tetrahydrofolate + glycine + H2O = (6S)-5,6,7,8-tetrahydrofolate + L-serine. The protein operates within one-carbon metabolism; tetrahydrofolate interconversion. Its pathway is amino-acid biosynthesis; glycine biosynthesis; glycine from L-serine: step 1/1. Catalyzes the reversible interconversion of serine and glycine with tetrahydrofolate (THF) serving as the one-carbon carrier. This reaction serves as the major source of one-carbon groups required for the biosynthesis of purines, thymidylate, methionine, and other important biomolecules. Also exhibits THF-independent aldolase activity toward beta-hydroxyamino acids, producing glycine and aldehydes, via a retro-aldol mechanism. The polypeptide is Serine hydroxymethyltransferase (Salmonella arizonae (strain ATCC BAA-731 / CDC346-86 / RSK2980)).